The sequence spans 320 residues: Ferrochelatase (320 aa).

Residues H194 and E275 each contribute to the Fe cation site.

Belongs to the ferrochelatase family. Monomer.

The protein resides in the cytoplasm. It catalyses the reaction heme b + 2 H(+) = protoporphyrin IX + Fe(2+). Its pathway is porphyrin-containing compound metabolism; protoheme biosynthesis; protoheme from protoporphyrin-IX: step 1/1. Functionally, catalyzes the ferrous insertion into protoporphyrin IX. This is Ferrochelatase from Escherichia coli O139:H28 (strain E24377A / ETEC).